We begin with the raw amino-acid sequence, 254 residues long: Pyrroloquinoline-quinone synthase (254 aa).

Belongs to the PqqC family.

The enzyme catalyses 6-(2-amino-2-carboxyethyl)-7,8-dioxo-1,2,3,4,7,8-hexahydroquinoline-2,4-dicarboxylate + 3 O2 = pyrroloquinoline quinone + 2 H2O2 + 2 H2O + H(+). The protein operates within cofactor biosynthesis; pyrroloquinoline quinone biosynthesis. Its function is as follows. Ring cyclization and eight-electron oxidation of 3a-(2-amino-2-carboxyethyl)-4,5-dioxo-4,5,6,7,8,9-hexahydroquinoline-7,9-dicarboxylic-acid to PQQ. The chain is Pyrroloquinoline-quinone synthase from Rhodopseudomonas palustris (strain ATCC BAA-98 / CGA009).